The sequence spans 100 residues: Small ribosomal subunit protein uS14c (100 aa).

This sequence belongs to the universal ribosomal protein uS14 family. As to quaternary structure, part of the 30S ribosomal subunit.

Its subcellular location is the plastid. In terms of biological role, binds 16S rRNA, required for the assembly of 30S particles. The chain is Small ribosomal subunit protein uS14c (rps14) from Cuscuta reflexa (Southern Asian dodder).